A 294-amino-acid polypeptide reads, in one-letter code: Shikimate dehydrogenase (NADP(+)) (294 aa).

Residues 14-16 and Thr61 contribute to the shikimate site; that span reads SKS. Lys65 acts as the Proton acceptor in catalysis. Asp77 provides a ligand contact to NADP(+). Asn86 and Asp102 together coordinate shikimate. NADP(+) is bound by residues 140–144 and Leu235; that span reads GSGGA. Tyr237 lines the shikimate pocket. Position 259 (Gly259) interacts with NADP(+).

It belongs to the shikimate dehydrogenase family. In terms of assembly, homodimer.

It carries out the reaction shikimate + NADP(+) = 3-dehydroshikimate + NADPH + H(+). The protein operates within metabolic intermediate biosynthesis; chorismate biosynthesis; chorismate from D-erythrose 4-phosphate and phosphoenolpyruvate: step 4/7. Functionally, involved in the biosynthesis of the chorismate, which leads to the biosynthesis of aromatic amino acids. Catalyzes the reversible NADPH linked reduction of 3-dehydroshikimate (DHSA) to yield shikimate (SA). The polypeptide is Shikimate dehydrogenase (NADP(+)) (Blochmanniella floridana).